A 229-amino-acid chain; its full sequence is Cytidylate kinase (229 aa).

Residue 12–20 (GPSGAGKGT) participates in ATP binding.

Belongs to the cytidylate kinase family. Type 1 subfamily.

The protein resides in the cytoplasm. The catalysed reaction is CMP + ATP = CDP + ADP. The enzyme catalyses dCMP + ATP = dCDP + ADP. The chain is Cytidylate kinase from Shewanella frigidimarina (strain NCIMB 400).